Consider the following 139-residue polypeptide: MAMTYHLDVVSAEQQMFSGLVEKIQVTGSEGELGIYPGHAPLLTAIKPGMIRIVKQHGHEEFIYLSGGILEVQLGNVTVLADTAIRGQDLDEARAMEAKRKAEEHISSSHGDVDYAQASAELAKAIAQLRVIELTKKAM.

It belongs to the ATPase epsilon chain family. F-type ATPases have 2 components, CF(1) - the catalytic core - and CF(0) - the membrane proton channel. CF(1) has five subunits: alpha(3), beta(3), gamma(1), delta(1), epsilon(1). CF(0) has three main subunits: a, b and c.

It is found in the cell inner membrane. Functionally, produces ATP from ADP in the presence of a proton gradient across the membrane. The protein is ATP synthase epsilon chain (atpC) of Escherichia coli O157:H7.